We begin with the raw amino-acid sequence, 262 residues long: Putative ankyrin repeat protein FPV243 (262 aa).

One copy of the ANK repeat lies at 25–54 (YGSTPLFEAICNCSCKNVKLFLENNADINE).

The protein is Putative ankyrin repeat protein FPV243 of Vertebrata (FPV).